Here is a 213-residue protein sequence, read N- to C-terminus: Eukaryotic translation initiation factor isoform 4E (213 aa).

Residues 1–37 (MATEVAAAVPPPQLDAEENSGLEAAAAEAKIQPSSGP) are disordered. MRNA is bound by residues 56–61 (QGAAWG), Lys88, and 106–107 (WE). Cys111 and Cys150 are oxidised to a cystine. MRNA contacts are provided by residues 157-162 (RQRQDK) and 202-205 (KRER).

It belongs to the eukaryotic initiation factor 4E family. EIF4F is a multi-subunit complex, the composition of which varies with external and internal environmental conditions. It is composed of at least EIF4A, EIF4E and EIF4G. EIF4E is also known to interact with other partners. In higher plants two isoforms of EIF4F have been identified, named isoform EIF4F and isoform EIF(iso)4F. Isoform EIF4F has subunits p220 and p26, whereas isoform EIF(iso)4F has subunits p82 and p28. As to quaternary structure, (Microbial infection) Interacts with potyvirus viral genome-linked protein (VPg) of plum pox virus (PPV) strain D both in nucleus and cytoplasm; this interaction is possible in susceptible hosts but is impaired in resistant plants. According to the redox status, the Cys-111-Cys-150 disulfide bridge may have a role in regulating protein function by affecting its ability to bind capped mRNA. In terms of tissue distribution, mostly expressed in leaves, flower buds, leaf buds and anthers, to a lower extent in roots, stems and green immature fruit, and, at low levels, in petals.

It localises to the cytoplasm. The protein localises to the nucleus. Its function is as follows. Component of the protein complex eIF4F, which is involved in the recognition of the mRNA cap, ATP-dependent unwinding of 5'-terminal secondary structure and recruitment of mRNA to the ribosome. Recognizes and binds the 7-methylguanosine-containing mRNA cap during an early step in the initiation of protein synthesis and facilitates ribosome binding by inducing the unwinding of the mRNAs secondary structures. Key component of recessive resistance to potyviruses such as the plum pox virus (PPV) strain D. Functionally, (Microbial infection) Susceptibility host factor required for viral infection by recruiting viral RNAs to the host ribosomal complex via an interaction with viral genome-linked protein (VPg). The chain is Eukaryotic translation initiation factor isoform 4E from Prunus domestica (Garden plum).